A 545-amino-acid polypeptide reads, in one-letter code: Chaperonin GroEL (545 aa).

ATP contacts are provided by residues 29 to 32 (TMGP), Lys50, 86 to 90 (DGTTT), Gly414, 480 to 482 (NAA), and Asp496.

This sequence belongs to the chaperonin (HSP60) family. In terms of assembly, forms a cylinder of 14 subunits composed of two heptameric rings stacked back-to-back. Interacts with the co-chaperonin GroES.

Its subcellular location is the cytoplasm. It catalyses the reaction ATP + H2O + a folded polypeptide = ADP + phosphate + an unfolded polypeptide.. Together with its co-chaperonin GroES, plays an essential role in assisting protein folding. The GroEL-GroES system forms a nano-cage that allows encapsulation of the non-native substrate proteins and provides a physical environment optimized to promote and accelerate protein folding. In Malacoplasma penetrans (strain HF-2) (Mycoplasma penetrans), this protein is Chaperonin GroEL.